We begin with the raw amino-acid sequence, 290 residues long: N-acetylmannosamine kinase (290 aa).

Residues 6–13 and 132–139 each bind ATP; these read ALDIGGTK and GVGGGIIL. Positions 156, 166, 168, and 173 each coordinate Zn(2+).

It belongs to the ROK (NagC/XylR) family. NanK subfamily. Homodimer.

It catalyses the reaction an N-acyl-D-mannosamine + ATP = an N-acyl-D-mannosamine 6-phosphate + ADP + H(+). It functions in the pathway amino-sugar metabolism; N-acetylneuraminate degradation; D-fructose 6-phosphate from N-acetylneuraminate: step 2/5. Functionally, catalyzes the phosphorylation of N-acetylmannosamine (ManNAc) to ManNAc-6-P. The chain is N-acetylmannosamine kinase from Yersinia pseudotuberculosis serotype O:3 (strain YPIII).